The chain runs to 966 residues: MLFAIGQRWISESENSLGLGIITGQDNRTVTISFPASDETRIYALASAPLTRVLFQKGDEITHQLGWKARVVDVMMRNELAFYLVQRLDNNEEIVVQEMELAHQISFSKPQDRLFSTQIDRNEHFVLRYKALKHQQEQFQSSLRGLRGNRAGLIPHQLHIAQEVGRRIAPRVLLADEVGLGKTIEAGMILQQQLLAEKVQRVLILVPETLQHQWLVEMLRRFNLHFSLFDEERCADFDNPEDHVEANPFVAENLIICALDWLVQQPKRAKQALAGEFDLLIVDEAHHLTWSEDSPSIAYELVMQLSAVIPAVLLLTATPEQLGQQSHFARLHLLDPNRFYSYRAFEKEQQQYQPVAKAVQSLLSEHILTVEEQNHLAELLSEQDIEPMLKVINSQADTEQKQVARGELMSNLIDRHGTGRLLFRNTRQGVQGFPHRIYHQIKLDLPTQYQNAINVLNMLGEIKDPELFYPEQIFQKMNADATWWRFDPRVDWLINLVKSLREEKILVICQDAITAIQLEQALREKEGIRSAVFHENMSIIERDRASAYFAQQEEGAQVLLSSSIGSEGRNFQFACHLVLFHLPNNPDLLEQCIGRLDRIGQRRDIQIYVPCFADTPQIRLAQWYHEGLNAFEETCPMGAILHEKCGAKLTEFLTSDTTDDFQAFIQQTHQQQLQLKSELEQGRDRLLELNSNGGEQAQQLANDIAIQDGSTELIDFTLNLFDIIGVEQEDLGEKSIVISPTGTMLVPDFPGLKEEGVTVTFDRDLALAREDLEFLTWDHPIVRNGIDLIVSGDIGKSAVALLVNKQLPTGTLLLELVYIIESQSPRGLQLTRFLPPTPLRLLLDIKGNDLSHQISFQGLQKQLKPMGKNMATKVIKIMRPAIEQLIKQSAKNVVEPAKMIIEQAKQLADQSLSAEINRLYALQAVNKNIRPEEIEQLESQRTLSLELLNQANWRLDSLRVIVSNKE.

The Helicase ATP-binding domain maps to 163–337 (EVGRRIAPRV…FARLHLLDPN (175 aa)). 176-183 (DEVGLGKT) contacts ATP. Positions 283 to 286 (DEAH) match the DEAH box motif. The Helicase C-terminal domain maps to 489–643 (RVDWLINLVK…TCPMGAILHE (155 aa)).

It belongs to the SNF2/RAD54 helicase family. RapA subfamily. Interacts with the RNAP. Has a higher affinity for the core RNAP than for the holoenzyme. Its ATPase activity is stimulated by binding to RNAP.

Its function is as follows. Transcription regulator that activates transcription by stimulating RNA polymerase (RNAP) recycling in case of stress conditions such as supercoiled DNA or high salt concentrations. Probably acts by releasing the RNAP, when it is trapped or immobilized on tightly supercoiled DNA. Does not activate transcription on linear DNA. Probably not involved in DNA repair. This Histophilus somni (strain 129Pt) (Haemophilus somnus) protein is RNA polymerase-associated protein RapA.